The sequence spans 355 residues: 3-isopropylmalate dehydrogenase (355 aa).

Positions 98, 108, 132, and 223 each coordinate substrate. 3 residues coordinate Mg(2+): aspartate 223, aspartate 247, and aspartate 251. 283-295 contacts NAD(+); it reads GSAPDIAGQQKAD.

This sequence belongs to the isocitrate and isopropylmalate dehydrogenases family. LeuB type 2 subfamily. As to quaternary structure, homodimer. Requires Mg(2+) as cofactor. Mn(2+) serves as cofactor.

The protein resides in the cytoplasm. The enzyme catalyses (2R,3S)-3-isopropylmalate + NAD(+) = 4-methyl-2-oxopentanoate + CO2 + NADH. Its pathway is amino-acid biosynthesis; L-leucine biosynthesis; L-leucine from 3-methyl-2-oxobutanoate: step 3/4. Functionally, catalyzes the oxidation of 3-carboxy-2-hydroxy-4-methylpentanoate (3-isopropylmalate) to 3-carboxy-4-methyl-2-oxopentanoate. The product decarboxylates to 4-methyl-2 oxopentanoate. The sequence is that of 3-isopropylmalate dehydrogenase from Clavibacter sepedonicus (Clavibacter michiganensis subsp. sepedonicus).